A 363-amino-acid chain; its full sequence is Adenylate cyclase 2 (363 aa).

Residues 157–286 form the Guanylate cyclase domain; sequence VFLFIDLAGS…DTVNTTARLE (130 aa). D162 and D206 together coordinate Mg(2+). Positions 341–363 are disordered; that stretch reads GDGATEPAGETVRSPAAEAFTSL.

Belongs to the adenylyl cyclase class-3 family. Mg(2+) serves as cofactor.

It catalyses the reaction ATP = 3',5'-cyclic AMP + diphosphate. Plays essential roles in regulation of cellular metabolism by catalyzing the synthesis of a second messenger, cAMP. In Rhizobium meliloti (strain 1021) (Ensifer meliloti), this protein is Adenylate cyclase 2 (cya2).